Consider the following 149-residue polypeptide: Limonene-1,2-epoxide hydrolase (149 aa).

The Proton donor role is filled by D101. The active-site Proton acceptor is D132.

This sequence belongs to the limonene-1,2-epoxide hydrolase family. As to quaternary structure, monomer.

It carries out the reaction limonene 1,2-epoxide + H2O = limonene-1,2-diol. It participates in terpene metabolism; (4R)-limonene degradation; (1S,4R)-1-hydroxylimonen-2-one from (4R)-limonene: step 2/3. Its function is as follows. Catalyzes the conversion of limonene-1,2-epoxide to limonene-1,2-diol. Can use both the (-) and (+) isomers of limonene-1,2-epoxide as substrates and also has some activity with 1-methylcyclohexene oxide, cyclohexene oxide and indene oxide as substrates. This Rhodococcus erythropolis (Arthrobacter picolinophilus) protein is Limonene-1,2-epoxide hydrolase (limA).